Consider the following 475-residue polypeptide: WASH complex subunit 1 (475 aa).

Residues 1–54 form a required for WASH complex assembly region; the sequence is MTAVKTQHSLAGQVYAVPLIQPDLRREEAIQQVADALQYLQNISGDIFSRISQR. The interval 1 to 167 is WHD1; sequence MTAVKTQHSL…EGLGGLPSNI (167 aa). Lys-219 participates in a covalent cross-link: Glycyl lysine isopeptide (Lys-Gly) (interchain with G-Cter in ubiquitin). Residues 296-475 are disordered; sequence EDGALLAPPP…GDEDEDDWES (180 aa). Residues 302–318 show a composition bias toward pro residues; that stretch reads APPPPPPPPPPPPPPAP. The interval 357–475 is VCA; it reads QGAPKEVVDP…GDEDEDDWES (119 aa). The 23-residue stretch at 369–391 folds into the WH2 domain; the sequence is GRATLLESIRQAGGIGKAKLRSV. Positions 390 to 406 are enriched in basic and acidic residues; sequence SVKERKLEKKKQKEQEQ. The span at 432–446 shows a compositional bias: gly residues; the sequence is SGKGPGTGTSEGPGG. A compositionally biased stretch (acidic residues) spans 466 to 475; the sequence is GDEDEDDWES.

This sequence belongs to the WASH1 family. In terms of assembly, component of the WASH core complex also described as WASH regulatory complex SHRC composed of WASHC1, WASHC2, WASHC3, WASHC4 and WASHC5. The WASH core complex associates with the F-actin-capping protein dimer (formed by CAPZA1, CAPZA2 or CAPZA3 and CAPZB) in a transient or substoichiometric manner which was initially described as WASH complex. Interacts (via WHD1 region) with WASHC2; the interaction is direct. Interacts with BECN1; WASHC1 and AMBRA1 can competitively interact with BECN1. Interacts with BLOC1S2; may associate with the BLOC-1 complex. Interacts with tubulin gamma chain (TUBG1 or TUBG2). Interacts with TBC1D23. Ubiquitinated at Lys-219 via 'Lys-63'-linked ubiquitin chains by the TRIM27:MAGEL2 E3 ubiquitin ligase complex, leading to promote endosomal F-actin assembly.

It localises to the early endosome membrane. The protein resides in the recycling endosome membrane. Its function is as follows. Acts as a component of the WASH core complex that functions as a nucleation-promoting factor (NPF) at the surface of endosomes, where it recruits and activates the Arp2/3 complex to induce actin polymerization, playing a key role in the fission of tubules that serve as transport intermediates during endosome sorting. Regulates the trafficking of endosomal alpha5beta1 integrin to the plasma membrane and involved in invasive cell migration. In T-cells involved in endosome-to-membrane recycling of receptors including T-cell receptor (TCR), CD28 and ITGAL; proposed to be implicated in T-cell proliferation and effector function. In dendritic cells involved in endosome-to-membrane recycling of major histocompatibility complex (MHC) class II probably involving retromer and subsequently allowing antigen sampling, loading and presentation during T-cell activation. Involved in cytokinesis and following polar body extrusion during oocyte meiotic maturation. Involved in Arp2/3 complex-dependent actin assembly driving Salmonella typhimurium invasion independent of ruffling. Involved in the exocytosis of MMP14 leading to matrix remodeling during invasive migration and implicating late endosome-to-plasma membrane tubular connections and cooperation with the exocyst complex. Involved in negative regulation of autophagy independently from its role in endosomal sorting by inhibiting BECN1 ubiquitination to inactivate PIK3C3/Vps34 activity. In Rattus norvegicus (Rat), this protein is WASH complex subunit 1.